A 316-amino-acid polypeptide reads, in one-letter code: Transcription initiation factor IIB (316 aa).

The TFIIB-type zinc-finger motif lies at 11-42 (PRVTCPNHPDAILVEDYRAGDMICPECGLVVG). Cys15, His18, Cys34, and Cys37 together coordinate Zn(2+). Residues Ser70, Ser76, and Ser92 each carry the phosphoserine modification. 2 consecutive repeat copies span residues 124–200 (MADR…LILK) and 218–294 (FCSN…LIYP). Residues Lys152, Arg154, Lys189, and Lys196 each contribute to the DNA site. The core promoter DNA-binding stretch occupies residues 189 to 193 (KEIGR). N6-acetyllysine; by autocatalysis is present on Lys238. Residues 244 to 316 (LVPGRSPISV…DTPVDKLPQL (73 aa)) form a necessary for TATA box-bound complex TBP formation region. Arg248 serves as a coordination point for DNA. A core promoter DNA-binding region spans residues 249–252 (SPIS). DNA is bound by residues Lys272, Ala281, Thr284, Arg286, and Arg290. The segment at 283 to 286 (VTIR) is core promoter DNA-binding.

It belongs to the TFIIB family. In terms of assembly, found in a ternary complex with TATA box-bound TBP. Part of a TFIID-containing RNA polymerase II pre-initiation complex (PIC) that is composed of TBP and at least GTF2A1, GTF2A2, GTF2E1, GTF2E2, GTF2F1, GTF2H2, GTF2H3, GTF2H4, GTF2H5, GTF2B, TCEA1, ERCC2, ERCC3, TAF1, TAF2, TAF3, TAF4, TAF5, TAF6, TAF7, TAF8, TAF9, TAF10, TAF11, TAF12 and TAF13. Associates with TFIID-TFIIA (DA complex) to form TFIID-TFIIA-TFIIB (DAB complex), which is then recognized by RNA polymerase II (Pol II). Found in a RNA polymerase II initiation complex. Interacts (via C-terminus) with TBP; this interaction with TATA box-bound TBP guides Pol II into the PIC. Interacts (via N-terminus) with Pol II. Interacts (via C-terminus) with SSU72; this interaction is inhibited by SYMPK. Interacts with NR2F1; this interaction is direct. Interacts with PGR. Interacts with ESR1. Interacts with GTF2F1 (via C-terminus and preferentially via acetylated form); this interaction prevents binding of GTF2B to GTF2F2. Interacts with GTF2F2 (via N-terminus); this interaction is inhibited in presence of GTF2F1. Interacts with the transcription elongation factor TCEA2. Interacts with HSF1 (via transactivation domain). Interacts with GPBP1. Post-translationally, acetylated. Autoacetylated; autoacetylation at Lys-238 stimulates transcription activation.

The protein resides in the nucleus. It localises to the chromosome. It catalyses the reaction L-lysyl-[protein] + acetyl-CoA = N(6)-acetyl-L-lysyl-[protein] + CoA + H(+). Its function is as follows. General transcription factor that plays a role in transcription initiation by RNA polymerase II (Pol II). Involved in the pre-initiation complex (PIC) formation and Pol II recruitment at promoter DNA. Together with the TATA box-bound TBP forms the core initiation complex and provides a bridge between TBP and the Pol II-TFIIF complex. Released from the PIC early following the onset of transcription during the initiation and elongation transition and reassociates with TBP during the next transcription cycle. Associates with chromatin to core promoter-specific regions. Binds to two distinct DNA core promoter consensus sequence elements in a TBP-independent manner; these IIB-recognition elements (BREs) are localized immediately upstream (BREu), 5'-[GC][GC][GA]CGCC-3', and downstream (BREd), 5'-[GA]T[TGA][TG][GT][TG][TG]-3', of the TATA box element. Modulates transcription start site selection. Also exhibits autoacetyltransferase activity that contributes to the activated transcription. The polypeptide is Transcription initiation factor IIB (Pongo abelii (Sumatran orangutan)).